The chain runs to 243 residues: Small ribosomal subunit protein eS4 (243 aa).

The S4 RNA-binding domain maps to 43–105 (IPLLYIVRDY…TGEHYRVLPN (63 aa)).

This sequence belongs to the eukaryotic ribosomal protein eS4 family.

The sequence is that of Small ribosomal subunit protein eS4 (rps4e) from Pyrococcus horikoshii (strain ATCC 700860 / DSM 12428 / JCM 9974 / NBRC 100139 / OT-3).